The primary structure comprises 394 residues: GDSL esterase/lipase At2g27360 (394 aa).

The signal sequence occupies residues 1–24 (MASQDCHMLLSFFISTFLITVVTS). S40 acts as the Nucleophile in catalysis. N-linked (GlcNAc...) asparagine glycosylation is found at N136 and N319. Residues D344 and H347 contribute to the active site. N-linked (GlcNAc...) asparagine glycosylation is found at N371 and N382.

This sequence belongs to the 'GDSL' lipolytic enzyme family.

The protein localises to the secreted. This chain is GDSL esterase/lipase At2g27360, found in Arabidopsis thaliana (Mouse-ear cress).